The following is a 205-amino-acid chain: MQHPTLQPEVDPNPVVSSSSSSSSSNPLPAHLNPANYPQTRYFSDSNIHLELTYNPLDPTKSLAQIRSPHAGANVLFLGTTRSTFDNRPVARLTYTSYAPLALRTLEKIARGAVTKYQLCGISISHRLGEVRVAEESIAIAVAAGHRRPAWRAGEEVLEECKAAVEIWKREEFIGAGAGEGEGEWRANRDTDSQGNCRGDKVAEG.

The interval 1 to 36 is disordered; that stretch reads MQHPTLQPEVDPNPVVSSSSSSSSSNPLPAHLNPAN. Residues 146 to 147, Lys162, and 169 to 171 contribute to the substrate site; these read HR and KRE. The interval 179–205 is disordered; sequence GEGEGEWRANRDTDSQGNCRGDKVAEG. Over residues 183 to 205 the composition is skewed to basic and acidic residues; sequence GEWRANRDTDSQGNCRGDKVAEG.

The protein belongs to the MoaE family. MOCS2B subfamily. As to quaternary structure, heterotetramer; composed of 2 small (MOCS2A) and 2 large (MOCS2B) subunits.

The protein localises to the cytoplasm. The catalysed reaction is 2 [molybdopterin-synthase sulfur-carrier protein]-C-terminal-Gly-aminoethanethioate + cyclic pyranopterin phosphate + H2O = molybdopterin + 2 [molybdopterin-synthase sulfur-carrier protein]-C-terminal Gly-Gly + 2 H(+). It functions in the pathway cofactor biosynthesis; molybdopterin biosynthesis. Functionally, catalytic subunit of the molybdopterin synthase complex, a complex that catalyzes the conversion of precursor Z into molybdopterin. Acts by mediating the incorporation of 2 sulfur atoms from thiocarboxylated MOCS2A into precursor Z to generate a dithiolene group. This is Molybdopterin synthase catalytic subunit from Ajellomyces capsulatus (strain NAm1 / WU24) (Darling's disease fungus).